Reading from the N-terminus, the 235-residue chain is Large ribosomal subunit protein uL1 (235 aa).

It belongs to the universal ribosomal protein uL1 family. As to quaternary structure, part of the 50S ribosomal subunit.

In terms of biological role, binds directly to 23S rRNA. The L1 stalk is quite mobile in the ribosome, and is involved in E site tRNA release. Its function is as follows. Protein L1 is also a translational repressor protein, it controls the translation of the L11 operon by binding to its mRNA. This Rhodospirillum centenum (strain ATCC 51521 / SW) protein is Large ribosomal subunit protein uL1.